The following is a 211-amino-acid chain: V-type ATP synthase subunit D (211 aa).

Belongs to the V-ATPase D subunit family.

Produces ATP from ADP in the presence of a proton gradient across the membrane. This Fusobacterium nucleatum subsp. nucleatum (strain ATCC 25586 / DSM 15643 / BCRC 10681 / CIP 101130 / JCM 8532 / KCTC 2640 / LMG 13131 / VPI 4355) protein is V-type ATP synthase subunit D.